Reading from the N-terminus, the 136-residue chain is Polyadenylate-binding protein-interacting protein 2B (136 aa).

Over residues 15 to 25 (NGSSVASTSPS) the composition is skewed to polar residues. Disordered stretches follow at residues 15 to 40 (NGSSVASTSPSVKCKEDQGLNGHEEK) and 107 to 136 (SVGDSHESEDILSKSNLNPDAKEFVPGVKY). A compositionally biased stretch (basic and acidic residues) spans 27–40 (KCKEDQGLNGHEEK).

It belongs to the PAIP2 family. Interacts (via central acidic portion and C-terminus) with PABPC1 (via the second and third RRM domains and the C-terminus). Post-translationally, ubiquitinated in vitro. In terms of tissue distribution, expressed at very high levels in pancreas, at high levels in testis and at moderately high levels in brain, heart and lung (at protein level).

In terms of biological role, inhibits translation of capped and polyadenylated mRNAs by displacing PABPC1 from the poly(A) tail. The chain is Polyadenylate-binding protein-interacting protein 2B (Paip2b) from Mus musculus (Mouse).